The following is a 206-amino-acid chain: Glycerol-3-phosphate acyltransferase (206 aa).

5 helical membrane-spanning segments follow: residues L3 to I23, V51 to V71, F83 to F103, I113 to G133, and W162 to W182.

Belongs to the PlsY family. As to quaternary structure, probably interacts with PlsX.

It is found in the cell membrane. It carries out the reaction an acyl phosphate + sn-glycerol 3-phosphate = a 1-acyl-sn-glycero-3-phosphate + phosphate. Its pathway is lipid metabolism; phospholipid metabolism. Catalyzes the transfer of an acyl group from acyl-phosphate (acyl-PO(4)) to glycerol-3-phosphate (G3P) to form lysophosphatidic acid (LPA). This enzyme utilizes acyl-phosphate as fatty acyl donor, but not acyl-CoA or acyl-ACP. The polypeptide is Glycerol-3-phosphate acyltransferase (Halalkalibacterium halodurans (strain ATCC BAA-125 / DSM 18197 / FERM 7344 / JCM 9153 / C-125) (Bacillus halodurans)).